The chain runs to 369 residues: Phenylalanine--tRNA ligase alpha subunit (369 aa).

Glu-269 is a Mg(2+) binding site.

Belongs to the class-II aminoacyl-tRNA synthetase family. Phe-tRNA synthetase alpha subunit type 1 subfamily. As to quaternary structure, tetramer of two alpha and two beta subunits. It depends on Mg(2+) as a cofactor.

The protein resides in the cytoplasm. The enzyme catalyses tRNA(Phe) + L-phenylalanine + ATP = L-phenylalanyl-tRNA(Phe) + AMP + diphosphate + H(+). The polypeptide is Phenylalanine--tRNA ligase alpha subunit (Brucella abortus (strain 2308)).